Here is a 200-residue protein sequence, read N- to C-terminus: Glycosyl hydrolase family 19 domain-containing protein HI_1415 (200 aa).

This sequence belongs to the glycosyl hydrolase 19 family.

In Haemophilus influenzae (strain ATCC 51907 / DSM 11121 / KW20 / Rd), this protein is Glycosyl hydrolase family 19 domain-containing protein HI_1415.